The primary structure comprises 406 residues: 2,3-bisphosphoglycerate-independent phosphoglycerate mutase (406 aa).

It belongs to the BPG-independent phosphoglycerate mutase family. A-PGAM subfamily.

It catalyses the reaction (2R)-2-phosphoglycerate = (2R)-3-phosphoglycerate. The protein operates within carbohydrate degradation; glycolysis; pyruvate from D-glyceraldehyde 3-phosphate: step 3/5. In terms of biological role, catalyzes the interconversion of 2-phosphoglycerate and 3-phosphoglycerate. This Methanococcus vannielii (strain ATCC 35089 / DSM 1224 / JCM 13029 / OCM 148 / SB) protein is 2,3-bisphosphoglycerate-independent phosphoglycerate mutase.